The sequence spans 344 residues: 3,4-dihydroxy-2-butanone 4-phosphate synthase (344 aa).

Residues 1–202 form a DHBP synthase region; the sequence is MILRRVTEAL…VSDLISYRLE (202 aa). D-ribulose 5-phosphate is bound by residues 27–28, D32, 139–143, and E163; these read RE and RTGHT. E28 serves as a coordination point for Mg(2+). H142 is a Mg(2+) binding site. The segment at 203 to 344 is GTP cyclohydrolase II-like; sequence NESLLKMFCQ…GLKLVETISL (142 aa).

It in the N-terminal section; belongs to the DHBP synthase family. This sequence in the C-terminal section; belongs to the GTP cyclohydrolase II family. It depends on Mg(2+) as a cofactor. Requires Mn(2+) as cofactor.

The enzyme catalyses D-ribulose 5-phosphate = (2S)-2-hydroxy-3-oxobutyl phosphate + formate + H(+). It participates in cofactor biosynthesis; riboflavin biosynthesis; 2-hydroxy-3-oxobutyl phosphate from D-ribulose 5-phosphate: step 1/1. Catalyzes the conversion of D-ribulose 5-phosphate to formate and 3,4-dihydroxy-2-butanone 4-phosphate. This chain is 3,4-dihydroxy-2-butanone 4-phosphate synthase (ribB), found in Helicobacter pylori (strain J99 / ATCC 700824) (Campylobacter pylori J99).